Here is a 169-residue protein sequence, read N- to C-terminus: S-ribosylhomocysteine lyase (169 aa).

3 residues coordinate Fe cation: H54, H58, and C128.

This sequence belongs to the LuxS family. As to quaternary structure, homodimer. The cofactor is Fe cation.

It carries out the reaction S-(5-deoxy-D-ribos-5-yl)-L-homocysteine = (S)-4,5-dihydroxypentane-2,3-dione + L-homocysteine. Functionally, involved in the synthesis of autoinducer 2 (AI-2) which is secreted by bacteria and is used to communicate both the cell density and the metabolic potential of the environment. The regulation of gene expression in response to changes in cell density is called quorum sensing. Catalyzes the transformation of S-ribosylhomocysteine (RHC) to homocysteine (HC) and 4,5-dihydroxy-2,3-pentadione (DPD). This is S-ribosylhomocysteine lyase from Shewanella woodyi (strain ATCC 51908 / MS32).